The primary structure comprises 486 residues: MSIDPAGSQASRQLPINLFTRSPTDAIPQSTYFIPSAWRRFQLSELINQVLGNTAENGSKPVPFDFLVNGEVLRGSLEAWVKKNRGGDEESQIDVEYVRSVMPPEEAARVEVEDWVSGLSLSRKGYVLLSSYLSHLQVLPLSAAAQSSSALYTLPLPTSLGATSCTWVSPQTQETDILVAAGGVDRQTHVYSIPSLSPDTADAPRELYTLHGHTGPISSVIASSSGKEIVTGSWDGNINLYVLPDAEPTEHQVPADPVSYLPGQGTKKRRKLEKDQEKAPIEGLTDGDATGEGGWRRAPDAVMRGHTGRVGGLVWDKLDSGKIWSAGWDGSVRGWEVETGAAGALRQGPFDKSALCVDQWKMNGTLATGNMDRTICLWDTRQATSLISLTLPTTSPVPSVTCHPTSPFTLASATYSGVVQIWDIRSPKTALFTVSKAQSKLADPNRKVTKNGKVLGERLLAVDWNGEVLVAGGEDGEVGIWRARGE.

Residues 12–99 are ubiquitin-like (UBL) domain; the sequence is RQLPINLFTR…ESQIDVEYVR (88 aa). 5 WD repeats span residues 212 to 251, 305 to 345, 349 to 388, 392 to 432, and 454 to 486; these read GHTG…PTEH, GHTG…AGAL, PFDK…SLIS, PTTS…TALF, and VLGE…ARGE. The interval 249–299 is disordered; sequence TEHQVPADPVSYLPGQGTKKRRKLEKDQEKAPIEGLTDGDATGEGGWRRAP.

It belongs to the WD repeat WDR12/YTM1 family. As to quaternary structure, component of the NOP7 complex, composed of ERB1, NOP7 and YTM1. The complex is held together by ERB1, which interacts with NOP7 via its N-terminal domain and with YTM1 via a high-affinity interaction between the seven-bladed beta-propeller domains of the 2 proteins. The NOP7 complex associates with the 66S pre-ribosome. Interacts (via UBL domain) with MDN1 (via VWFA/MIDAS domain).

The protein localises to the nucleus. It is found in the nucleolus. The protein resides in the nucleoplasm. Its function is as follows. Component of the NOP7 complex, which is required for maturation of the 25S and 5.8S ribosomal RNAs and formation of the 60S ribosome. This is Ribosome biogenesis protein YTM1 from Cryptococcus neoformans var. neoformans serotype D (strain B-3501A) (Filobasidiella neoformans).